The chain runs to 624 residues: Hemocyanin E chain (624 aa).

Cu cation is bound by residues histidine 169, histidine 173, histidine 200, histidine 320, histidine 324, and histidine 360. The N-linked (GlcNAc...) asparagine glycan is linked to asparagine 445. A disulfide bond links cysteine 529 and cysteine 577.

The protein belongs to the tyrosinase family. Hemocyanin subfamily. In terms of assembly, tarantula hemocyanin is a 24-chain polymer with seven different chains identified. As to expression, hemolymph.

It localises to the secreted. It is found in the extracellular space. Its function is as follows. Hemocyanins are copper-containing oxygen carriers occurring freely dissolved in the hemolymph of many mollusks and arthropods. This Aphonopelma sp. (American tarantula) protein is Hemocyanin E chain (HCE).